A 560-amino-acid chain; its full sequence is SET domain-containing protein 4 (560 aa).

2 disordered regions span residues 1–61 (MTSP…PSPQ) and 125–157 (KKQNQDDNSKVSVTHNESSKENKITPSMRAEDN). Residues 26 to 38 (SRSSSYSSNSSMS) are compositionally biased toward low complexity. Residues 47–59 (LSVSSAASETLPS) show a composition bias toward polar residues. Residues 141-157 (ESSKENKITPSMRAEDN) are compositionally biased toward basic and acidic residues. The PHD-type zinc-finger motif lies at 160–210 (KNGCICGSSDSKDELFIQCNKCKTWQHKLCYAFKKSDPIKRDFVCKRCDSD). The SET domain maps to 346-475 (ADIEVRKSSN…KGEEISVEWQ (130 aa)).

This sequence belongs to the SET3 family.

Functionally, putative chromatin regulator. This chain is SET domain-containing protein 4 (SET4), found in Saccharomyces cerevisiae (strain ATCC 204508 / S288c) (Baker's yeast).